The following is a 196-amino-acid chain: UPF0340 protein TTHA0583 (196 aa).

It belongs to the UPF0340 family.

The sequence is that of UPF0340 protein TTHA0583 from Thermus thermophilus (strain ATCC 27634 / DSM 579 / HB8).